Reading from the N-terminus, the 280-residue chain is Nucleotide-binding protein CV_3336 (280 aa).

8-15 is a binding site for ATP; the sequence is GLSGSGKS. 57 to 60 contacts GTP; the sequence is DTRS.

It belongs to the RapZ-like family.

In terms of biological role, displays ATPase and GTPase activities. The sequence is that of Nucleotide-binding protein CV_3336 from Chromobacterium violaceum (strain ATCC 12472 / DSM 30191 / JCM 1249 / CCUG 213 / NBRC 12614 / NCIMB 9131 / NCTC 9757 / MK).